The primary structure comprises 247 residues: Phycocyanobilin:ferredoxin oxidoreductase (247 aa).

It belongs to the HY2 family.

The enzyme catalyses (2R,3Z)-phycocyanobilin + 4 oxidized [2Fe-2S]-[ferredoxin] = biliverdin IXalpha + 4 reduced [2Fe-2S]-[ferredoxin] + 4 H(+). In terms of biological role, catalyzes the four-electron reduction of biliverdin IX-alpha (2-electron reduction at both the A and D rings); the reaction proceeds via an isolatable 2-electron intermediate, 181,182-dihydrobiliverdin. The chain is Phycocyanobilin:ferredoxin oxidoreductase from Synechococcus sp. (strain CC9605).